A 124-amino-acid polypeptide reads, in one-letter code: Fluoride-specific ion channel FluC 2 (124 aa).

The next 4 membrane-spanning stretches (helical) occupy residues 1–21, 36–58, 63–85, and 104–124; these read MNFLLAGIGASIGAMLRYAIT, SNLPTPTLFINLTGAFILGFIFG, VFIYAIVGTGVLGGYTTFSTMNT, and LSSYLGGLILVFVGYYLAILF. Na(+)-binding residues include Gly75 and Thr78.

Belongs to the fluoride channel Fluc/FEX (TC 1.A.43) family. As to quaternary structure, heterodimer composed of FluC1 and FluC2. Neither FluC1 nor FluC2 alone catalyzes fluoride efflux from liposomes.

The protein localises to the cell membrane. It carries out the reaction fluoride(in) = fluoride(out). Its activity is regulated as follows. Na(+) is not transported, but it plays an essential structural role and its presence is essential for fluoride channel function. Fluoride-specific ion channel. Important for reducing fluoride concentration in the cell, thus reducing its toxicity. The sequence is that of Fluoride-specific ion channel FluC 2 from Lactobacillus acidophilus (strain ATCC 700396 / NCK56 / N2 / NCFM).